Reading from the N-terminus, the 886-residue chain is Alanine--tRNA ligase (886 aa).

Zn(2+) contacts are provided by His564, His568, Cys666, and His670.

The protein belongs to the class-II aminoacyl-tRNA synthetase family. The cofactor is Zn(2+).

It is found in the cytoplasm. The enzyme catalyses tRNA(Ala) + L-alanine + ATP = L-alanyl-tRNA(Ala) + AMP + diphosphate. Functionally, catalyzes the attachment of alanine to tRNA(Ala) in a two-step reaction: alanine is first activated by ATP to form Ala-AMP and then transferred to the acceptor end of tRNA(Ala). Also edits incorrectly charged Ser-tRNA(Ala) and Gly-tRNA(Ala) via its editing domain. The polypeptide is Alanine--tRNA ligase (Prochlorococcus marinus (strain MIT 9515)).